We begin with the raw amino-acid sequence, 20 residues long: Dentinal fluid transport-stimulating peptide (20 aa).

Residues 1–20 (GVIAWELQHNEPGRKDSTAG) are disordered. Positions 8-20 (QHNEPGRKDSTAG) are enriched in basic and acidic residues.

This peptide stimulates the transport of dentinal fluid, which is important for the prevention of dental caries. The chain is Dentinal fluid transport-stimulating peptide from Rattus norvegicus (Rat).